Here is a 198-residue protein sequence, read N- to C-terminus: Glycerol-3-phosphate acyltransferase (198 aa).

Helical transmembrane passes span 5-25, 56-76, 84-104, 114-134, and 158-178; these read LILL…LWIG, SIVT…PFFF, FWLL…FAGF, AGVI…IFLL, and LFMG…FVVW.

This sequence belongs to the PlsY family. In terms of assembly, probably interacts with PlsX.

It localises to the cell membrane. The catalysed reaction is an acyl phosphate + sn-glycerol 3-phosphate = a 1-acyl-sn-glycero-3-phosphate + phosphate. It participates in lipid metabolism; phospholipid metabolism. Its function is as follows. Catalyzes the transfer of an acyl group from acyl-phosphate (acyl-PO(4)) to glycerol-3-phosphate (G3P) to form lysophosphatidic acid (LPA). This enzyme utilizes acyl-phosphate as fatty acyl donor, but not acyl-CoA or acyl-ACP. This is Glycerol-3-phosphate acyltransferase from Listeria welshimeri serovar 6b (strain ATCC 35897 / DSM 20650 / CCUG 15529 / CIP 8149 / NCTC 11857 / SLCC 5334 / V8).